The primary structure comprises 126 residues: MAIWGLGTDIVEVARIEQSLARGNSLVKRVLTPKEQEEMTASVDEAAFLAKRFAAKEACSKAFGRGISAGLSFQHMQVVHNEYGKPEWHFTETAAQWVKEQGISGSHLSISDEKHYAVATVILETD.

Mg(2+) is bound by residues D9 and E57.

This sequence belongs to the P-Pant transferase superfamily. AcpS family. Mg(2+) is required as a cofactor.

It is found in the cytoplasm. It catalyses the reaction apo-[ACP] + CoA = holo-[ACP] + adenosine 3',5'-bisphosphate + H(+). Transfers the 4'-phosphopantetheine moiety from coenzyme A to a Ser of acyl-carrier-protein. The polypeptide is Holo-[acyl-carrier-protein] synthase (Idiomarina loihiensis (strain ATCC BAA-735 / DSM 15497 / L2-TR)).